The primary structure comprises 458 residues: ATP synthase subunit beta (458 aa).

148 to 155 (GGAGVGKT) contributes to the ATP binding site.

Belongs to the ATPase alpha/beta chains family. In terms of assembly, F-type ATPases have 2 components, CF(1) - the catalytic core - and CF(0) - the membrane proton channel. CF(1) has five subunits: alpha(3), beta(3), gamma(1), delta(1), epsilon(1). CF(0) has three main subunits: a(1), b(2) and c(9-12). The alpha and beta chains form an alternating ring which encloses part of the gamma chain. CF(1) is attached to CF(0) by a central stalk formed by the gamma and epsilon chains, while a peripheral stalk is formed by the delta and b chains.

The protein localises to the cell inner membrane. The enzyme catalyses ATP + H2O + 4 H(+)(in) = ADP + phosphate + 5 H(+)(out). In terms of biological role, produces ATP from ADP in the presence of a proton gradient across the membrane. The catalytic sites are hosted primarily by the beta subunits. The protein is ATP synthase subunit beta of Legionella pneumophila (strain Paris).